The following is a 474-amino-acid chain: Eukaryotic translation initiation factor 3 subunit L (474 aa).

In terms of domain architecture, PCI spans Asp-255–Leu-449.

Belongs to the eIF-3 subunit L family. As to quaternary structure, component of the eukaryotic translation initiation factor 3 (eIF-3) complex.

Its subcellular location is the cytoplasm. Its function is as follows. Component of the eukaryotic translation initiation factor 3 (eIF-3) complex, which is involved in protein synthesis of a specialized repertoire of mRNAs and, together with other initiation factors, stimulates binding of mRNA and methionyl-tRNAi to the 40S ribosome. The eIF-3 complex specifically targets and initiates translation of a subset of mRNAs involved in cell proliferation. This is Eukaryotic translation initiation factor 3 subunit L from Neurospora crassa (strain ATCC 24698 / 74-OR23-1A / CBS 708.71 / DSM 1257 / FGSC 987).